A 128-amino-acid polypeptide reads, in one-letter code: uncharacterized protein (128 aa).

A disordered region spans residues 25–61; sequence LPNRLPEGSTVGPKPDSSWEAGSQGNWGLTSSGAGQD. Over residues 44-61 the composition is skewed to polar residues; sequence EAGSQGNWGLTSSGAGQD.

This is an uncharacterized protein from Homo sapiens (Human).